The sequence spans 759 residues: Short transient receptor potential channel 1 (759 aa).

Residues 1 to 30 are disordered; it reads MMAALYPSTDLSGASSSSLPSSPSSSSPNE. Residues 1 to 352 are Cytoplasmic-facing; the sequence is MMAALYPSTD…GRIIHTPFMK (352 aa). Low complexity predominate over residues 15–28; sequence SSSSLPSSPSSSSP. ANK repeat units lie at residues 46–75, 83–112, and 124–153; these read LNEK…SGDL, LGRN…QKLM, and MDVA…SLPK. Residues 353–373 traverse the membrane as a helical segment; it reads FIIHGASYFTFLLLLNLYSLV. Residues 374-381 are Extracellular-facing; it reads YNEDKKNT. A helical transmembrane segment spans residues 382–402; that stretch reads MGPALERIDYLLILWIIGMIW. The Cytoplasmic segment spans residues 403-461; sequence SDIKRLWYEGLEDFLEESRNQLSFVMNSLYLATFALKVVAHNKFHDFADRKDWDAFHPT. A helical membrane pass occupies residues 462–482; that stretch reads LVAEGLFAFANVLSYLRLFFM. Topologically, residues 483–505 are extracellular; it reads YTTSSILGPLQISMGQMLQDFGK. Residues 506-526 form a helical membrane-spanning segment; sequence FLGMFLLVLFSFTIGLTQLYD. Over 527–552 the chain is Cytoplasmic; the sequence is KGYTPKEQKDCVGIFCEQQSNDTFHS. Residues 553 to 573 form a helical membrane-spanning segment; that stretch reads FIGTCFALFWYIFSLAHVAIF. At 574 to 582 the chain is on the extracellular side; that stretch reads VTRFSYGEE. Residues 583-603 traverse the membrane as a helical segment; it reads LQSFVGAVIVGTYNVVVVIVL. The Cytoplasmic segment spans residues 604–759; it reads TKLLVAMLHK…SKYAMFYPRN (156 aa).

This sequence belongs to the transient receptor (TC 1.A.4) family. STrpC subfamily. TRPC1 sub-subfamily. In terms of assembly, homotetramer and heterotetramer with TRPC4 and/or TRPC5. Interacts with TRPC4 and TRPC5. Interacts with ITPR3. Interacts with MX1 and RNF24. Interacts with FKBP4. Interacts with TRPC4AP. Interacts with PLSCR1. Interacts with PKD2L2. Forms a heterotetramer with PKD2 with a 2:2 stoichiometry; has distinct channel properties separate from PKD2 or TRPC1 homomers alone. Post-translationally, activation of PRKCA induces phosphorylation of TRPC1 and subsequent Ca2+ entry into cells.

The protein resides in the cell membrane. It catalyses the reaction Ca(2+)(in) = Ca(2+)(out). Its function is as follows. Forms a receptor-activated non-selective calcium permeant cation channel. Probably is operated by a phosphatidylinositol second messenger system activated by receptor tyrosine kinases or G-protein coupled receptors. Also activated by intracellular calcium store depletion. This chain is Short transient receptor potential channel 1 (TRPC1), found in Oryctolagus cuniculus (Rabbit).